Here is a 745-residue protein sequence, read N- to C-terminus: Polyribonucleotide nucleotidyltransferase (745 aa).

Residues Asp487 and Asp493 each coordinate Mg(2+). The region spanning 554-613 is the KH domain; it reads PRIETMQIPTDKIRDVIGTGGKIIREIVEKTGAKINIEDTGIVKIASSDGKAIKAAYNWI. The S1 motif domain occupies 623–691; sequence GTIYDGTIVK…ERGKIRLSMK (69 aa). Residues 695–745 form a disordered region; that stretch reads QETGEDLTEKLKAERAERGEPEREERSDRGDRGDRGPRRDRGERRRESSGE. The span at 701 to 745 shows a compositional bias: basic and acidic residues; the sequence is LTEKLKAERAERGEPEREERSDRGDRGDRGPRRDRGERRRESSGE.

It belongs to the polyribonucleotide nucleotidyltransferase family. Mg(2+) is required as a cofactor.

It is found in the cytoplasm. It catalyses the reaction RNA(n+1) + phosphate = RNA(n) + a ribonucleoside 5'-diphosphate. Functionally, involved in mRNA degradation. Catalyzes the phosphorolysis of single-stranded polyribonucleotides processively in the 3'- to 5'-direction. The chain is Polyribonucleotide nucleotidyltransferase from Methylorubrum extorquens (strain CM4 / NCIMB 13688) (Methylobacterium extorquens).